The following is a 147-amino-acid chain: Phage-like element PBSX protein XkdM (147 aa).

The protein to B.subtilis YqbM.

The protein is Phage-like element PBSX protein XkdM (xkdM) of Bacillus subtilis (strain 168).